The sequence spans 253 residues: MTTIDLNCNLGESFGAYKMGNDDEILPFVSSINVACGFHAGDPSVMRQTVEKAMQHNVAIGAHPGFPDLIGFGRRNMNVSANEVYDYVLYQIDALDAFVKAAGGKMQHVKPHGALYNMAATNPEIADAIAKAIYHMNSSLSLYGLANSEAFIQAAEKYNITLVQEAFADRTYKEDGTLTSRTEENALIKNEDEAIKQVLQMVKEGYVNSVNGEKVAVQAQTICLHGDGEKAVQFARKIYRTFEHNKISICAPK.

Belongs to the LamB/PxpA family. Forms a complex composed of PxpA, PxpB and PxpC.

It catalyses the reaction 5-oxo-L-proline + ATP + 2 H2O = L-glutamate + ADP + phosphate + H(+). In terms of biological role, catalyzes the cleavage of 5-oxoproline to form L-glutamate coupled to the hydrolysis of ATP to ADP and inorganic phosphate. The chain is 5-oxoprolinase subunit A from Bacillus anthracis (strain CDC 684 / NRRL 3495).